Reading from the N-terminus, the 426-residue chain is Oligouridylate-binding protein 1A (426 aa).

Residues Met1–Ala26 are disordered. Positions Gln9 to Ala26 are enriched in low complexity. RRM domains are found at residues Arg63–Ala137 and Phe148–Lys226. A disordered region spans residues Phe230–Phe268. Position 250 is a phosphoserine (Ser250). An RRM 3 domain is found at Thr269 to Lys344.

In terms of assembly, interacts with UBA1A and UBA2A.

It localises to the nucleus. Functionally, heterogeneous nuclear ribonucleoprotein (hnRNP)-like protein that acts as a component of the pre-mRNA processing machinery. Functions to facilitate the nuclear maturation of plant pre-mRNAs. The polypeptide is Oligouridylate-binding protein 1A (UBP1A) (Arabidopsis thaliana (Mouse-ear cress)).